Consider the following 244-residue polypeptide: Ribonuclease 3 (244 aa).

The RNase III domain maps to Phe-7–Gly-134. Glu-47 provides a ligand contact to Mg(2+). The active site involves Asp-51. Mg(2+)-binding residues include Asn-120 and Glu-123. Glu-123 is an active-site residue. The DRBM domain occupies Asp-161–Ser-230.

The protein belongs to the ribonuclease III family. Homodimer. Mg(2+) is required as a cofactor.

The protein resides in the cytoplasm. The catalysed reaction is Endonucleolytic cleavage to 5'-phosphomonoester.. In terms of biological role, digests double-stranded RNA. Involved in the processing of primary rRNA transcript to yield the immediate precursors to the large and small rRNAs (23S and 16S). Processes some mRNAs, and tRNAs when they are encoded in the rRNA operon. Processes pre-crRNA and tracrRNA of type II CRISPR loci if present in the organism. This is Ribonuclease 3 from Clostridium kluyveri (strain NBRC 12016).